A 61-amino-acid polypeptide reads, in one-letter code: Metallothionein-1L (61 aa).

Positions 1 to 29 (MDPNCSCATGGSCSCASSCKCKECKCTSC) are beta. A divalent metal cation contacts are provided by Cys-5, Cys-7, Cys-13, Cys-15, Cys-19, Cys-21, Cys-24, Cys-26, Cys-29, Cys-33, Cys-34, Cys-36, Cys-37, Cys-41, Cys-44, Cys-48, Cys-50, Cys-57, Cys-59, and Cys-60. Positions 30–61 (KKSCCSCCPMGCAKCAQGCVCKGASEKCSCCA) are alpha.

This sequence belongs to the metallothionein superfamily. Type 1 family. As to quaternary structure, monomer. In terms of tissue distribution, expressed in reticulocytes.

Its function is as follows. Metallothioneins have a high content of cysteine residues that bind various heavy metals; these proteins are transcriptionally regulated by both heavy metals and glucocorticoids. The polypeptide is Metallothionein-1L (MT1L) (Homo sapiens (Human)).